Here is a 593-residue protein sequence, read N- to C-terminus: Trehalose synthase/amylase TreS (593 aa).

D90 is a substrate binding site. N132 serves as a coordination point for Ca(2+). 2 residues coordinate substrate: H133 and Q198. Position 200 (D200) interacts with Ca(2+). R228 serves as a coordination point for substrate. D230 (nucleophile) is an active-site residue. Residues Y234, L235, and E237 each coordinate Ca(2+). E272 functions as the Proton donor in the catalytic mechanism. Substrate-binding residues include H341 and D342.

The protein belongs to the glycosyl hydrolase 13 family. TreS subfamily. Homohexamer.

The enzyme catalyses D-maltose = alpha,alpha-trehalose. The catalysed reaction is Endohydrolysis of (1-&gt;4)-alpha-D-glucosidic linkages in polysaccharides containing three or more (1-&gt;4)-alpha-linked D-glucose units.. It participates in glycan biosynthesis; glycogen biosynthesis. The amylase activity is stimulated by addition of Ca(2+), but this cation and other divalent cations inhibit the trehalose synthase activity. In addition, trehalose synthase activity, but not amylase activity, is strongly inhibited, and in a competitive manner, by validoxylamine. On the other hand, amylase, but not trehalose synthase activity, is inhibited by the known transition-state amylase inhibitor, acarbose, suggesting the possibility of two different active sites. Other metal ions such as Mg(2+), Mn(2+), and Co(2+) are also somewhat effective in the stimulation of amylase activity, but Hg(2+), Cu(2+), Ni(2+) and Zn(2+) are inhibitory. Its function is as follows. Catalyzes the reversible interconversion of maltose and trehalose by transglucosylation. Maltose is the preferred substrate. To a lesser extent, also displays amylase activity, catalyzing the endohydrolysis of (1-&gt;4)-alpha-D-glucosidic linkages in glycogen and maltooligosaccharides such as maltoheptaose, to produce maltose which then can be converted to trehalose. TreS plays a key role in the utilization of trehalose for the production of glycogen and alpha-glucan via the TreS-Pep2 branch involved in the biosynthesis of maltose-1-phosphate (M1P). Might also function as a sensor and/or regulator of trehalose levels within the cell. Thus, when trehalose levels in the cell become dangerously low, TreS can expedite the conversion of glycogen to maltose via its amylase activity and then convert the maltose to trehalose; but this enzyme also can expedite or promote the conversion of trehalose to glycogen when cytoplasmic trehalose levels become too high. Is also able to catalyze the hydrolytic cleavage of alpha-aryl glucosides, as well as alpha-glucosyl fluoride in vitro. This is Trehalose synthase/amylase TreS from Mycolicibacterium smegmatis (strain ATCC 700084 / mc(2)155) (Mycobacterium smegmatis).